Reading from the N-terminus, the 217-residue chain is Ribulose-phosphate 3-epimerase (217 aa).

Serine 6 provides a ligand contact to substrate. A divalent metal cation contacts are provided by histidine 29, aspartate 31, and histidine 62. Aspartate 31 functions as the Proton acceptor in the catalytic mechanism. Residues histidine 62, 138–141, 171–173, and 193–194 each bind substrate; these read GFGG, DGG, and GS. Aspartate 171 provides a ligand contact to a divalent metal cation. Catalysis depends on aspartate 171, which acts as the Proton donor.

Belongs to the ribulose-phosphate 3-epimerase family. Requires a divalent metal cation as cofactor.

It carries out the reaction D-ribulose 5-phosphate = D-xylulose 5-phosphate. The protein operates within carbohydrate degradation. Catalyzes the reversible epimerization of D-ribulose 5-phosphate to D-xylulose 5-phosphate. The polypeptide is Ribulose-phosphate 3-epimerase (Helicobacter pylori (strain J99 / ATCC 700824) (Campylobacter pylori J99)).